A 256-amino-acid chain; its full sequence is 5'-nucleotidase SurE (256 aa).

The a divalent metal cation site is built by Asp8, Asp9, Ser40, and Asn94.

Belongs to the SurE nucleotidase family. It depends on a divalent metal cation as a cofactor.

Its subcellular location is the cytoplasm. It carries out the reaction a ribonucleoside 5'-phosphate + H2O = a ribonucleoside + phosphate. Functionally, nucleotidase that shows phosphatase activity on nucleoside 5'-monophosphates. This is 5'-nucleotidase SurE from Wolbachia pipientis subsp. Culex pipiens (strain wPip).